A 215-amino-acid chain; its full sequence is Probable transaldolase 1 (215 aa).

Lysine 83 (schiff-base intermediate with substrate) is an active-site residue.

This sequence belongs to the transaldolase family. Type 3B subfamily.

It localises to the cytoplasm. It catalyses the reaction D-sedoheptulose 7-phosphate + D-glyceraldehyde 3-phosphate = D-erythrose 4-phosphate + beta-D-fructose 6-phosphate. The protein operates within carbohydrate degradation; pentose phosphate pathway; D-glyceraldehyde 3-phosphate and beta-D-fructose 6-phosphate from D-ribose 5-phosphate and D-xylulose 5-phosphate (non-oxidative stage): step 2/3. Functionally, transaldolase is important for the balance of metabolites in the pentose-phosphate pathway. This chain is Probable transaldolase 1, found in Bacillus anthracis.